The sequence spans 261 residues: MKLVADVGNTNTVFGIWNRGKILKNWRISTGRLETEDEMYVVLKQLLEAGNVDLKSIEDICVASVVPRLNSIFHYFGRKYLELDPVLVTAIDGIGVKWDVDFPSEIGADRVANVIGAHEFYGKDAIVIDTGTAITVDVLKDGAFIGGAILPGPMMAMRALFSKTAKLPEVDLFYVENHIGKNTEDNIRIGVVNGTYYALKAIISKVKEELGDKIPVIATGGNSPMFNIGNGFFDILDSDLTLKGIAVFCERVRKLEKNSAG.

Residue 6 to 13 (DVGNTNTV) participates in ATP binding. 107-110 (GADR) is a substrate binding site. Catalysis depends on D109, which acts as the Proton acceptor. K(+) is bound at residue D129. T132 lines the ATP pocket. A substrate-binding site is contributed by T183.

It belongs to the type III pantothenate kinase family. As to quaternary structure, homodimer. It depends on NH4(+) as a cofactor. K(+) is required as a cofactor.

Its subcellular location is the cytoplasm. It carries out the reaction (R)-pantothenate + ATP = (R)-4'-phosphopantothenate + ADP + H(+). It functions in the pathway cofactor biosynthesis; coenzyme A biosynthesis; CoA from (R)-pantothenate: step 1/5. In terms of biological role, catalyzes the phosphorylation of pantothenate (Pan), the first step in CoA biosynthesis. This Kosmotoga olearia (strain ATCC BAA-1733 / DSM 21960 / TBF 19.5.1) protein is Type III pantothenate kinase.